Reading from the N-terminus, the 330-residue chain is Ribosomal RNA small subunit methyltransferase H (330 aa).

S-adenosyl-L-methionine-binding positions include 35 to 37 (GGY), aspartate 53, phenylalanine 80, aspartate 101, and glutamine 108.

The protein belongs to the methyltransferase superfamily. RsmH family.

It localises to the cytoplasm. It catalyses the reaction cytidine(1402) in 16S rRNA + S-adenosyl-L-methionine = N(4)-methylcytidine(1402) in 16S rRNA + S-adenosyl-L-homocysteine + H(+). Its function is as follows. Specifically methylates the N4 position of cytidine in position 1402 (C1402) of 16S rRNA. The sequence is that of Ribosomal RNA small subunit methyltransferase H from Rhodopseudomonas palustris (strain BisB18).